A 196-amino-acid chain; its full sequence is N-(5'-phosphoribosyl)anthranilate isomerase (196 aa).

Belongs to the TrpF family.

It carries out the reaction N-(5-phospho-beta-D-ribosyl)anthranilate = 1-(2-carboxyphenylamino)-1-deoxy-D-ribulose 5-phosphate. It participates in amino-acid biosynthesis; L-tryptophan biosynthesis; L-tryptophan from chorismate: step 3/5. The protein is N-(5'-phosphoribosyl)anthranilate isomerase of Nitratiruptor sp. (strain SB155-2).